The sequence spans 62 residues: Lepidopteran-selective toxin (62 aa).

The first 24 residues, 1 to 24 (MKFLYGVILIALFLTVMTATLSEA), serve as a signal peptide directing secretion. 4 disulfides stabilise this stretch: C26/C43, C29/C51, C40/C56, and C44/C58. Y62 is a propeptide.

This sequence belongs to the short scorpion toxin superfamily. Chloride channel inhibitor family. As to expression, expressed by the venom gland.

The protein resides in the secreted. Its function is as follows. Toxin with unknown function in healthy organisms. On glioma cells, interacts with chloride channels (probably ClC-3/CLCN3) and MMP2 at the surface of glioma cells. This complex is then internalized via caveolae, thus inhibiting the chloride channels necessary for cell shrinkage and tumor propagation. Induces flaccid paralysis in H.virescens larvae. Is not toxic to S.falculata larvae or mice. The protein is Lepidopteran-selective toxin of Hottentotta tamulus (Eastern Indian scorpion).